The chain runs to 5495 residues: MGDQPKATTTATGGAAGPVPEGDAVMATTNQDALAKGAGDGPAQDAAQEPGQAEHGEPGDGGDGGDDGATDAGASSLPPSEIGGRAPLDTACSDADGGAPSSLAGGIVGPPSPLTGCYLLIVLGEPHSEEHKDNILQHLLKGFLSWDVSDCHVDLEEELNTITQHAPEGEEARHGERLIQYASENLVTEVLIHPQYNTLIQCMRNLLSSFTRHRHIIHAGYTFSGNGSWILQDGTFSVADFSEAFQEHDVQRVIRAYADTITMNIHCADAGLWHTLPEKAFARQCRIRINPVDVLDTSSECINGFIDYLAPMVMPTSLRELLETSDVVGNIRFTHPTLYVFPGGQGDAALFGINGFNMLVDGGFNRKACFWDFARHLDRLDAVLMTRLNNSNVQGLGAVVSRKRDAHVYPQIGHFFGNVPDRKGLPSPDGDKDRDPLLIDLFERGHGIVSDLKALDLKPQCCYRNQEPVNLYHKVGHGTLDMYVISPARDSKEVKEFLQKWHAGDQRLFAARDSRDFNFPLQNLVSICALLVWQPANPDDTITRILFPGSTPDFKIQEGLEKLKHLEFMKHSTCTAKSIAPAIQTVTSTRKSLKSAIEATPAPPSASYKTTKFSPVASAALAVQHPQQQDNKAKEAAAAAAAAAAAAASAATIARAKADSMDTDAEPEHEADPEPADTGDEAAPTEQEPEAETEPEPEHEPEAEQDKDVGEEKKVEVLIMKPQQATPAVIAASGKDGVDAASADATPTGKLSKASAKGKADKPRAEVKPVVRSRIDTKPPKSMDRKLAKRDEKKSSPTTTPAARAPVAQNAKPKVLSRPATKSSPSSTPAKSAKEANNRKVLESKQQAARVQATSTVSRRVTSTASERRVQQQAEAKTAATGATQATQRKPISRRPRGVSPSKRAPAPGSPVKQAKPKAADLKKTRLDKGGTTDSSLVSTPSADEATAAKKLQDLTASQELDAEKQRELDDLKEEQEVVREIEAVFSRDEMKRQQHQQIKAELREMPAEGTGDGENEPDEEEEYLIIEKEEVEQYTEDSIVEQESSMTKEEEIQKHQRDSQESEKKRKKSAEEEIEAAIAKVEAAERKARLEGASARQDESELDVEPEQSKIKAEVQDIIATAKDIAKSRTEEQLAKPAEEELSSPTPEEKLSKKTSDTKDDQIGAPVDVLPVNLQESLPEEKFSATIESGATTAPTLPEDERIPLDQIKEDLVIEEKYVKEETKEAEAIVVATVQTLPEAAPLAIDTILASATKDAPKDANAEALGELPDSGERVLPMKMTFEAQQNLLRDVIKTPDEVADLPVHEEADLGLYEKDSQDAGAKSISHKEESAKEEKETDDEKENKVGEIELGDEPNKVDISHVLLKESVQEVAEKVVVIETTVEKKQEEIVEATTVITQENQEDLMEQVKDKEEHEQKIESGIITEKEAKKSASTPEEKETSDITSDDELPAQLADPTTVPPKSAKDREDTGSIESPPTIEEAIEVEVQAKQEAQKPVPAPEEAIKTEKSPLASKETSRPESATGSVKEDTEQTKSKKSPVPSRPESEAKDKKSPFASGEASRPESVAESVKDEAGKAESRRESIAKTHKDESSLDKAKEQESRRESLAESIKPESGIDEKSALASKEASRPESVTDKSKEPSRRESIAESLKAESTKDEKSAPPSKEASRPGSVVESVKDETEKSKEPSRRESIAESAKPPIEFREVSRPESVIDGIKDESAKPESRRDSPLASKEASRPESVLESVKDEPIKSTEKSRRESVAESFKADSTKDEKSPLTSKDISRPESAVENVMDAVGSAERSQPESVTASRDVSRPESVAESEKDDTDKPESVVESVIPASDVVEIEKGAADKEKGVFVSLEIGKPDSPSEVISRPGPVVESVKPESRRESSTEIVLPCHAEDSKEPSRPESKVECLKDESEVLKGSTRRESVAESDKSSQPFKETSRPESAVGSMKDESMSKEPSRRESVKDGAAQSRETSRPASVAESAKDGADDLKELSRPESTTQSKEAGSIKDEKSPLASEEASRPASVAESVKDEAEKSKEESRRESVAEKSPLPSKEASRPASVAESIKDEAEKSKEESRRESVAEKSPLPSKEASRPASVAESIKDEAEKSKEESRRESVAEKSPLPSKEASRPASVAESIKDEAEKSKEESRRESVAEKSPLPSKEASRPASVAESIKDEAEKSKEESRRESVAEKSPLPSKEASRPASVAESIKDEAEKSKEESRRESVAEKSPLPSKEASRPASVAESIKDEAEKSKEESRRESVAEKSPLPSKEASRPASVAESIKDEAEKSKEETRRESVAEKSPLPSKEASRPASVAESIKDEAEKSKEESRRESAAEKSPLPSKEASRPASVAESVKDEADKSKEESRRESMAESGKAQSIKGDQSPLKEVSRPESVAESVKDDPVKSKEPSRRESVAGSVTADSARDDQSPLESKGASRPESVVDSVKDEAEKQESRRESKTESVIPPKAKDDKSPKEVLQPVSMTETIREDADQPMKPSQAESRRESIAESIKASSPRDEKSPLASKEASRPGSVAESIKYDLDKPQIIKDDKSTEHSRRESLEDKSAVTSEKSVSRPLSVASDHEAAVAIEDDAKSSISPKDKSRPGFVAETVSSPIEEATMEFSKIEVVEKSSLALSLQGGSGGKLQTDSSPVDVAEGDFSHAVASVSTVTPTLTKPAELAQIGAAKTVSSPLDEALRTPSAPEHISRADSPAECASEEIASQDKSPQVLKESSRPAWVAESKDDAAQLKSSVEDLRSPVASTEISRPASAGETASSPIEEAPKDFAEFEQAEKAVLPLTIELKGNLPTLSSPVDVAHGDFPQTSTPTSSPTVASVQPAELSKVDIEKTASSPIDEAPKSLIGCPAEERPESPAESAKDAAESVEKSKDASRPPSVVESTKADSTKGDISPSPESVLEGPKDDVEKSKESSRPPSVSASITGDSTKDVSRPASVVESVKDEHDKAESRRESIAKVESVIDEAGKSDSKSSSQDSQKDEKSTLASKEASRRESVVESSKDDAEKSESRPESVIASGEPVPRESKSPLDSKDTSRPGSMVESVTAEDEKSEQQSRRESVAESVKADTKKDGKSQEASRPSSVDELLKDDDEKQESRRQSITGSHKAMSTMGDESPMDKADKSKEPSRPESVAESIKHENTKDEESPLGSRRDSVAESIKSDITKGEKSPLPSKEVSRPESVVGSIKDEKAESRRESVAESVKPESSKDATSAPPSKEHSRPESVLGSLKDEGDKTTSRRVSVADSIKDEKSLLVSQEASRPESEAESLKDAAAPSQETSRPESVTESVKDGKSPVASKEASRPASVAENAKDSADESKEQRPESLPQSKAGSIKDEKSPLASKDEAEKSKEESRRESVAEQFPLVSKEVSRPASVAESVKDEAEKSKEESPLMSKEASRPASVAGSVKDEAEKSKEESRRESVAEKSPLPSKEASRPASVAESVKDEADKSKEESRRESGAEKSPLASKEASRPASVAESIKDEAEKSKEESRRESVAEKSPLPSKEASRPTSVAESVKDEAEKSKEESRRDSVAEKSPLASKEASRPASVAESVQDEAEKSKEESRRESVAEKSPLASKEASRPASVAESIKDEAEKSKEESRRESVAEKSPLASKEASRPTSVAESVKDEAEKSKEESSRDSVAEKSPLASKEASRPASVAESVQDEAEKSKEESRRESVAEKSPLASKEASRPASVAESVKDDAEKSKEESRRESVAEKSPLASKEASRPASVAESVKDEAEKSKEESRRESVAEKSPLPSKEASRPTSVAESVKDEAEKSKEESRRESVAEKSSLASKKASRPASVAESVKDEAEKSKEESRRESVAEKSPLASKEASRPASVAESVKDEAEKSKEESRRESVAEKSPLPSKEASRPTSVAESVKDEADKSKEESRRESGAEKSPLASMEASRPTSVAESVKDETEKSKEESRRESVTEKSPLPSKEASRPTSVAESVKDEAEKSKEESRRESVAEKSPLASKESSRPASVAESIKDEAEGTKQESRRESMPESGKAESIKGDQSSLASKETSRPDSVVESVKDETEKPEGSAIDKSQVASRPESVAVSAKDEKSPLHSRPESVADKSPDASKEASRSLSVAETASSPIEEGPRSIADLSLPLNLTGEAKGKLPTLSSPIDVAEGDFLEVKAESSPRPAVLSKPAEFSQPDTGHTASTPVDEASPVLEEIEVVEQHTTSGVGATGATAETDLLDLTETKSETVTKQSETTLFETLTSKVESKVEVLESSVKQVEEKVQTSVKQAETTVTDSLEQLTKKSSEQLTEIKSVLDTNFEEVAKIVADVAKVLKSDKDITDIIPDFDERQLEEKLKSTADTEEESDKSTRDEKSLEISVKVEIESEKSSPDQKSGPISIEEKDKIEQSEKAQLRQGILTSSRPESVASQPESVPSPSQSAASHEHKEVELSESHKAEKSSRPESVASQVSEKDMKTSRPASSTSQFSTKEGDEETTESLLHSLTTTETVETKQMEEKSSFESVSTSVTKSTVLSSQSTVQLREESTSESLSSSLKVEDSSRRESLSSLLAEKGGIATNTSLKEDTSASASQLEELLVQSEECSSESIVSEIQTSIAQKSNKEIKDARETKVTSQFTTTTSSATKDDSLKETVAEFLATEKIVSAKEAFSTEATKSADDCLKKTTASAVSSTSASQRALFVGTDESRRESLLSQASESRLTHSDPEDEEPADDVDERSSVKESRSKSIATIMMTSIYKPSEDMEPISKLVEEEHEHVEELAQEVTSTSKTTTLLQSSEQSSTTTSSTSKTGASRVESITLTQMDQQTSQSQGDPADRKTPPTAPVSPGVKAMSSTGSAGSVIGAGAGAVAAGGKCESSAASIVSSSGPMSPKDISGKSSPGALTSESQSIPTPLGRESHTDTPESSPKPTSPFPRVSKDELKSLEMQHHSQEQMLAGAAAAAGAECEGDIPELHELRGLECTTALSGSTDKIITTTITTVTKVISADGKEIVTEQKTVTTTDSSEPDSEKVVVTTTRTTSESERDQLLPKEVALLRGLYRASTPGSEDDEDLLLGSPRSATSYELQHSSSGVSKRSDLDADGDESQDDIPPQYGSEEHSTARSILLPRTADPMATSFYGALPDSFDVVMKPSTEPIPIQGAPSGDSQSSESVESSSQTWAGHKFLDQADKDFQRALEEHVQARGAEVMSSVTAKYSYSPSKAEEMEQIVSGTAERQRFPLSDVQRARVAESGFATVGSVASQQQQQEKGGEVEQAVPTTTAVTASTTATASSTGALPKDRLEEWGKPLGLPSPAPLPVEGGADIRTTPKKERRLVATKTRLNNEKNLRRRSESPNKAGKKPAPVYVDLTYVPHNGNSYYAHVDFFKRVRARYYVFSGTEPSRQVYDALLEAKQTWEDKELEVTIIPTYDTDVLGYWVAENEELLAKHRIDLSPSASRCTINLQDHETSCSAYRLEF.

Disordered stretches follow at residues 1-97 (MGDQ…DADG), 656-975 (AKAD…LKEE), 988-1074 (RDEM…AEEE), 1086-1111 (ERKA…EQSK), 1128-1167 (KSRT…IGAP), 1185-1204 (SATI…DERI), 1255-1275 (KDAP…SGER), 1306-1358 (HEEA…EPNK), 1402-1840 (NQED…VVES), 1866-2631 (EIGK…PGFV), 2709-2810 (AKTV…KDFA), 2830-4166 (LPTL…DLSL), 4196-4230 (KAES…EASP), 4362-4612 (IIPD…ASQL), 4636-4668 (AQKS…DDSL), 4687-4975 (AFST…QMLA), 5035-5065 (KTVT…ERDQ), 5101-5138 (SYEL…EEHS), 5170-5199 (PSTE…QTWA), and 5328-5350 (GLPS…PKKE). Residues 35–48 (AKGAGDGPAQDAAQ) are compositionally biased toward low complexity. 3 stretches are compositionally biased toward basic and acidic residues: residues 656–672 (AKAD…HEAD), 696–716 (EPEH…KKVE), and 758–795 (GKAD…EKKS). 2 stretches are compositionally biased toward low complexity: residues 797 to 806 (PTTTPAARAP) and 819 to 831 (PATK…TPAK). Residues 832 to 843 (SAKEANNRKVLE) show a composition bias toward basic and acidic residues. The span at 850-888 (RVQATSTVSRRVTSTASERRVQQQAEAKTAATGATQATQ) shows a compositional bias: low complexity. Over residues 918–931 (KAADLKKTRLDKGG) the composition is skewed to basic and acidic residues. Residues 932–942 (TTDSSLVSTPS) are compositionally biased toward polar residues. 2 stretches are compositionally biased toward basic and acidic residues: residues 962–975 (DAEK…LKEE) and 988–1007 (RDEM…REMP). Acidic residues predominate over residues 1012–1041 (GDGENEPDEEEEYLIIEKEEVEQYTEDSIV). Over residues 1047–1065 (MTKEEEIQKHQRDSQESEK) the composition is skewed to basic and acidic residues. 2 stretches are compositionally biased toward basic and acidic residues: residues 1128–1140 (KSRT…KPAE) and 1148–1163 (PEEK…KDDQ). Polar residues predominate over residues 1187 to 1196 (TIESGATTAP). Basic and acidic residues-rich tracts occupy residues 1306-1319 (HEEA…KDSQ), 1327-1337 (SHKEESAKEEK), 1343-1358 (KENK…EPNK), and 1408-1443 (EQVK…KETS). Repeat copies occupy residues 1469–1502 (REDT…VPAP) and 1513–1539 (LASK…KSKK). Residues 1469 to 4032 (REDTGSIESP…SPLASKESSR (2564 aa)) form a 53 X approximate repeat region. Basic and acidic residues-rich tracts occupy residues 1546–1555 (PESEAKDKKS), 1571–1663 (SVKD…DEKS), 1679–1696 (SVKD…RESI), 1718–1732 (GIKD…RRDS), and 1748–1779 (SVKD…DEKS). Tandem repeats lie at residues 1622 to 1649 (KSAL…RESI), 1660 to 1686 (DEKS…ETEK), 1690 to 1718 (PSRR…VIDG), 1755 to 1782 (KSTE…SPLT), 1790 to 1818 (ESAV…RDVS), 1837 to 1865 (VVES…FVSL), 1874 to 1902 (SEVI…IVLP), 1911 to 1939 (PSRP…SVAE), 1948 to 1976 (KETS…ESVK), 1985 to 2013 (TSRP…STTQ), 2022 to 2050 (DEKS…EKSK), 2059 to 2087 (AEKS…EKSK), 2096 to 2124 (AEKS…EKSK), 2133 to 2161 (AEKS…EKSK), 2170 to 2198 (AEKS…EKSK), 2215 to 2243 (KEAS…RESV), and 2262 to 2292 (ESIK…KEAS). The segment covering 1804 to 1815 (ERSQPESVTASR) has biased composition (polar residues). Basic and acidic residues-rich tracts occupy residues 1887 to 1896 (VKPESRRESS), 1904 to 1942 (HAED…ESDK), 1960 to 1976 (MKDE…ESVK), 1994 to 2007 (SAKD…ELSR), 2041 to 2059 (SVKD…ESVA), 2078 to 2096 (SIKD…ESVA), 2115 to 2133 (SIKD…ESVA), 2152 to 2170 (SIKD…ESVA), 2189 to 2207 (SIKD…ESVA), 2226 to 2244 (SIKD…ESVA), 2263 to 2281 (SIKD…ESVA), 2300 to 2318 (SIKD…ESVA), 2337 to 2355 (SIKD…ESAA), 2374 to 2391 (SVKD…RESM), 2419 to 2435 (SVKD…RRES), 2466 to 2482 (SVKD…ESKT), 2560 to 2588 (IKYD…EDKS), and 2604 to 2627 (SDHE…DKSR). Residues 2355-2391 (AEKSPLPSKEASRPASVAESVKDEADKSKEESRRESM) form repeat 20. 2 consecutive repeat copies span residues 2703–2726 (LAQI…PSAP) and 2761–2787 (WVAE…ASTE). Over residues 2764-2780 (ESKDDAAQLKSSVEDLR) the composition is skewed to basic and acidic residues. The residue at position 2800 (S2800) is a Phosphoserine; by GSK3-beta. 3 tandem repeats follow at residues 2820–2846 (LPLT…DFPQ), 2864–2892 (LSKV…AEER), and 2907–2933 (VEKS…GDIS). The segment covering 2845–2861 (PQTSTPTSSPTVASVQP) has biased composition (low complexity). 2 stretches are compositionally biased toward basic and acidic residues: residues 2889–2914 (AEER…KDAS) and 2942–2954 (GPKD…KESS). A compositionally biased stretch (polar residues) spans 2955–2966 (RPPSVSASITGD). 28 consecutive repeat copies span residues 2956-2987 (PPSV…EHDK), 3006-3034 (GKSD…SRRE), 3049-3075 (SRPE…KDTS), 3089-3117 (EKSE…SQEA), 3131-3158 (DEKQ…SPMD), 3200-3224 (KSDI…SVVG), 3228-3256 (DEKA…APPS), 3265-3293 (VLGS…EKSL), 3302-3330 (PESE…ESVK), 3339-3367 (KEAS…ESLP), 3376-3404 (DEKS…EQFP), 3413-3441 (PASV…ASRP), 3450-3478 (DEAE…ASRP), 3487-3515 (DEAD…ASRP), 3524-3552 (DEAE…ASRP), 3561-3589 (DEAE…ASRP), 3598-3626 (DEAE…ASRP), 3635-3663 (DEAE…ASRP), 3672-3700 (DEAE…ASRP), 3709-3737 (DEAE…ASRP), 3746-3774 (DDAE…ASRP), 3783-3811 (DEAE…ASRP), 3820-3848 (DEAE…ASRP), 3867-3894 (RRES…SVKD), 3895-3921 (EAEK…EASR), 3931-3958 (DEAD…EASR), 3968-3995 (DETE…EASR), and 4005-4032 (DEAE…ESSR). Composition is skewed to basic and acidic residues over residues 2980-2996 (SVKD…ESIA), 3017-3051 (SQKD…ESRP), 3061-3075 (VPRE…KDTS), 3087-3116 (EDEK…KSQE), 3156-3168 (PMDK…EPSR), 3175-3208 (SIKH…KGEK), and 3226-3248 (IKDE…ESSK). Phosphoserine is present on residues S3067, S3071, and S3075. The span at 3300-3310 (SRPESEAESLK) shows a compositional bias: basic and acidic residues. The segment covering 3316–3327 (SQETSRPESVTE) has biased composition (polar residues). 14 stretches are compositionally biased toward basic and acidic residues: residues 3350 to 3363 (NAKD…EQRP), 3373 to 3399 (SIKD…RESV), 3419 to 3431 (SVKD…KEES), 3448 to 3465 (VKDE…ESVA), 3484 to 3502 (SVKD…ESGA), 3521 to 3539 (SIKD…ESVA), 3558 to 3576 (SVKD…DSVA), 3599 to 3613 (EAEK…ESVA), 3632 to 3650 (SIKD…ESVA), 3669 to 3687 (SVKD…DSVA), 3710 to 3724 (EAEK…ESVA), 3743 to 3761 (SVKD…ESVA), 3780 to 3798 (SVKD…ESVA), and 3817 to 3835 (SVKD…ESVA). Positions 3836 to 3850 (EKSSLASKKASRPAS) are enriched in low complexity. Basic and acidic residues-rich tracts occupy residues 3854–3872 (SVKD…ESVA), 3891–3909 (SVKD…ESVA), 3928–3946 (SVKD…ESGA), 3965–3983 (SVKD…ESVT), 4002–4020 (SVKD…ESVA), 4039–4066 (SIKD…ESIK), 4086–4095 (SVKDETEKPE), and 4115–4141 (AKDE…KEAS). Composition is skewed to polar residues over residues 4142–4152 (RSLSVAETASS) and 4214–4223 (QPDTGHTAST). 3 stretches are compositionally biased toward basic and acidic residues: residues 4362–4379 (IIPD…KSTA), 4386–4410 (DKST…KSSP), and 4419–4432 (IEEK…EKAQ). The segment covering 4443 to 4461 (PESVASQPESVPSPSQSAA) has biased composition (low complexity). A compositionally biased stretch (basic and acidic residues) spans 4462–4481 (SHEHKEVELSESHKAEKSSR). The segment covering 4498–4508 (RPASSTSQFST) has biased composition (polar residues). The segment covering 4517 to 4528 (ESLLHSLTTTET) has biased composition (low complexity). A compositionally biased stretch (basic and acidic residues) spans 4529 to 4539 (VETKQMEEKSS). The segment covering 4540 to 4560 (FESVSTSVTKSTVLSSQSTVQ) has biased composition (low complexity). Composition is skewed to basic and acidic residues over residues 4575–4584 (KVEDSSRRES) and 4639–4650 (SNKEIKDARETK). Low complexity-rich tracts occupy residues 4651 to 4662 (VTSQFTTTTSSA) and 4703 to 4714 (TTASAVSSTSAS). A compositionally biased stretch (acidic residues) spans 4744–4754 (PEDEEPADDVD). 2 stretches are compositionally biased toward basic and acidic residues: residues 4755–4764 (ERSSVKESRS) and 4788–4798 (LVEEEHEHVEE). Low complexity predominate over residues 4804–4829 (TSTSKTTTLLQSSEQSSTTTSSTSKT). The segment covering 4835 to 4851 (ESITLTQMDQQTSQSQG) has biased composition (polar residues). Residues 4875 to 4905 (GSAGSVIGAGAGAVAAGGKCESSAASIVSSS) are compositionally biased toward low complexity. Positions 4915–4930 (GKSSPGALTSESQSIP) are enriched in polar residues. Phosphoserine; by GSK3-beta is present on S4950. The span at 4955–4970 (VSKDELKSLEMQHHSQ) shows a compositional bias: basic and acidic residues. Positions 5101-5112 (SYELQHSSSGVS) are enriched in polar residues. Residues 5185–5196 (SQSSESVESSSQ) are compositionally biased toward low complexity.

As to quaternary structure, heterodimer of a heavy and a light chain. Interacts with Fmr1. Found in a complex with tubulin and Futsch. Post-translationally, several minor light chains can be created with markedly different pIs. Phosphorylated by SGG/GSK3. Phosphorylated by LRRK2 at the presynapse of neuromuscular junctions, which negatively regulates the activity controlling synaptic differentiation. Neuronal cells within the PNS and CNS.

The protein resides in the cytoplasm. The protein localises to the cytoskeleton. In terms of biological role, during embryogenesis, necessary for dendritic and axonal organization and growth at the neuromuscular junction through the regulation of the synaptic microtubule cytoskeleton. Microtubule hairpin loops are found within a small subset of synaptic boutons at the neuromuscular synapse, these loops are stabilized by futsch. Loop morphology and dynamics suggest that rearrangement of these microtubule-based loops is a critical component of the process of bouton division and for subsequent nerve-terminal growth and branching. Translation is repressed by Fmr1. Together with ringer, required for neuromuscular junction (NMJ) bouton growth by regulating synaptic microtubules. Function with ringer in maintaining microtubule stability and dynamics, is essential for promoting axon regeneration in response to peripheral (PNS) and central nervous system (CNS) injury. In response to axotomy, acts downstream of a stress response cascade involving Xbp1 splicing, to control axon regeneration. The protein is Microtubule-associated protein futsch (futsch) of Drosophila melanogaster (Fruit fly).